The chain runs to 90 residues: Acylphosphatase (90 aa).

The Acylphosphatase-like domain maps to 5–90 (SYLFNVKGKV…WQELTDFKMY (86 aa)). Active-site residues include R20 and N38.

It belongs to the acylphosphatase family.

The catalysed reaction is an acyl phosphate + H2O = a carboxylate + phosphate + H(+). This chain is Acylphosphatase (acyP), found in Aliivibrio fischeri (strain ATCC 700601 / ES114) (Vibrio fischeri).